Here is a 239-residue protein sequence, read N- to C-terminus: MLIHTKAIIISALKYGEADLIVKAYTLSDGLCTYMLKGVLKSRKGKFKASMFQSLTQLEIVANHRGGGKMEYLKEAKVTGNYQSLHTHPIKLAMVMFLAEMLRNAIREEESNEPLFHYLEYSFQFLDSTDKIANFHLLFLLNLTRYLGFQPEMGIKDLPVFNLLDGIFQDFSSNDYCIEGKNVDLLKSFLGTDFDALQYIKMNQTSRNDFLSMLLLYYELHIEGFRKPKSLSVLNEIFG.

Belongs to the RecO family.

Involved in DNA repair and RecF pathway recombination. The protein is DNA repair protein RecO of Christiangramia forsetii (strain DSM 17595 / CGMCC 1.15422 / KT0803) (Gramella forsetii).